The chain runs to 3655 residues: MEDGFEKSLSSSIELLKAESTEIEEKIKLTKILITKVSSISSDASQLYAELIPLLLDFLRNTEVNLYRNSSVNELKIEALTLIQSCAHRDEFKQYAQSCVLSFISLIKADNEEVAVFCLKVIMDIFKTFKFCIESTAQPFFDLVLELSTNLPYLIPSIFVENPKSNEEENTTLAFGSYLSTETSIIQQRVNSLAISTQPLELASQSFRVYVECPVIIVLILQAYRQAAFPGVQAIIPCFLKMVQIDVPIDIASYAMIEKDSSIDFIEFIRNKYQYRNFFMAQVKTLSFLAYILRTHPNTLSEKDIIPDIVIKLLRRCPFDMCFARKELLVATRHILSTNLKSLFVKKLDFLLDLNILLGNGVGTQKLLRPLAFSTLADLLHHVRDELNETQIRKSIMIYSTNMHDLTLSIGLQTMGARLILNMVDRMISLPSIPDAIFLLLSIFDSFVNKFSELNDSLDQFFKKKYEEEIKETKSPTRSSPRDLSSFSTSVNDGSFLFKNLMFGLRALMYGLRTCKSRCIEIGGEQFSGFLTNIKPFEAVTFQKLFFEVGKGFSYFRPEQVYLETFFCCEEESLDRPAISTLPRNKDEKDCLEVFATIFIHLEPSIFLKVFETNLPTFFDQLKKNLTLFHIPQFLLSNESTSSKFLNILLRFLLSRIEELGSSDIRHGSVLLRLFRLSFVTVSMFATENEPVLRPYVSEIIVKCMKLAPNSANSLNYYYLLRALFRGIGGGRFESLYKEVMPLLHALLEAFNSLLISARTPKEKDLFTELCLTIPVRLSLLLPYMSYLMRPLVMSLKSSQELVSQGLRTFELCLDNLTPDFLDPIMAPYIEDLMNALWSHLQPLPYNYNHSHTALKILGKLGGRNRKLLDRVQSLKNSPEPNNDFTLLLSIKGVKQPQLLHYTQYVDEAVNLLSSPSSDLEVKQQAFTYVCNISKLYVYKSDATNSLASSIRCTADKISKSNFDFRRPYSVIPSRMTGRSSFTQLSDDSDETIILASATYGLFFATTVDELREEAYFWLEKLAVNVIVHDIFYAFDVIQGNHSKFTTNLQKEVIISPHYFAHCLSEVVCNDNSKMGDAVKHVLKFMFSFLESIFENPERAFILPIFEVLLSDFRHKCYDPHWYKKYGGCFGLECLIEQDHSSKWLFDRQVDILTALFFTLKDTTSEVPTVCKDHVMDVLKQLFRKIYASKDTEIAPGILGHLVLELSNHNSVVRSSTQKLLSLLSELSNTPIVKLVSPFKERLLSPIFAKPLRALPFHIQIGHIDAVNYCISLGSELITFSDELIRLIHETTALAEADDDALIGIGKTSHFKNAALLIRLRVVCVELLSTCILKIDFNNPQHAHLREGIIVVFFKSLYAKSKELIEAASLGLKNALQEDQKLSKELLQTTLRPILYNISDYRRLSVAGLEGLGRLLRLLTNYFKVEIGRKLLDHLKALLENVDFQKVSSLPLFCQTEMKIVRALIDLFHLLPNNANRFMDELLICVVEFSLRLQRTFPNYFSEPLLKYVNRYPEDAWKFFMVRYDEAAFTSVFVELLRLKDSDPLLSVVKDNWLFFQTILTNEINTVTANRYSFALDSAIVILQRDPSFFKDKNDFFRGSMDAVLAISHLVENESILESMVFWNDLLVRTSTFLLEVYDLCIYNYDDGLKLLSCFHMYKNSLAKNLVSDLTAHLVKKIEEPDLENNVKLILNLILSKDYGFLLKENLAGILLTYLNQNVSSLEKCNQIFSIFYEVFFQHPSTNVYANDEGIKIGALQIISFFLKNVPEITVQHQTEMLKMCSLFGNSEDVMIKQLSIYVMSLFILRSQFPYELVNVVYMALLKSSPIEVRHLVKSSFDNIFSYIFSEEPESKKSPIWFELPLQVISSQSQNISQLLNVYDFISSHSDIFIEHRGRYVPILIDSLYKFGAIPNPNPEIRALSLGLIKVLLEWNDLQLKVDQKEIFSNNQKRAILSYLFRFVCLFSEPFTEGLCSEAISLLERLLSSGTWASLGMKLSFFTKSITHFDATDANSVMFANSLRTLSIVVGHSDSAWIEENLSDLKFLLEKSLENESVGVQSAIGNFVSTILTLSNTHPSIAGNPIFNDIWTSIASWTERRLQSCSQIEVTLPCVECFFKYKKDALHTLLPGFMRCFHKVAKEFLSLGSQPSGNSLNLQIVNAVDERVSILKSMIELGCSYISYLGDQRRWFLSALVQIIEKSSSYEICNYLLEIVRGWIMNSPVPVPTVKEKAALLLKMVTFEGRFSQNEQNDLFNKYLSFIADIYEMEPYKNSELTFRLEAVYLLGTRVANKKLKERFIKGLNSSFPSDLFSRFQFLLGSQHWESLSNTYWIVQLNIFLSRCFDLNQRCQFYKKPKLFSCFSIYCREFDEDLTSQAQDTEMLHNNLLKYGIIDFNQNSMLVSDFVLPVLSLQFSNSKIAEYLWRDFFNASVCSFTKDEIPLCIGSIISFLSREYHIRLLGKTPNVLETILTSIVSSDMPIPLPPHLLVYLSKTYGLHHYCILLLENSLQNNPGLSEDELTVYHKSCLDALSDIYYSLDEHDLYHGLWRRRANFLETEVATSHEQCHEWEKAQLVYEHAQLKVCTGSLPYSPTEHGFWLDHWILCAQKLNQWDVLFDFSKQEGCAELYLECAWRLSDWSTEQDTLEKATKSLSPFTSLRRHTADALLYLNKTQRKMGSVTEFSRIIDECMQFSLRRWQQLPKRVYQSHVSLLHHFQEIVELQEAFGIYSQLNDTNIHNIDNKLRDIKVVLQGWRERLPNVWDDIDIWSDLIAWRQSVFKSINKVFLPLVSIAQQSTNKSNTNSVSYLYRGYHELAWIINRFAHVARVHHLPEVCINQLTKIYTLPNIEIQEAFLKLREQAECHYESPSEMQLGLEVINNTNLMYFRNRQKAEFFTLKGMFQNRLGEKDEANQAFATAVQIDIGSGKAWSEWGLYHDELFQANPQEIHHACNAVSCFLQASSLLSSSNSKPLLTRVLWLLSVDDSHGSVSEVVSSFKSEIPTWNWIPFIPQLLSALSHRESIHARAILIQIAKTYPQSLHFQLRTAYEDFLMLKKQQAANVLRGNSRLRENDSSSDNKSKDLSPSGSFSSVSQFNSKNGSPSSIDSSEKHQISTVKPAWELIADVTSILKTAYPLLALTMETMVDQIHTRLKSFPEEDAYRLIVALLNDGLQYISRLGVVSKNTFQLPMSQANIQRFAENVLPVSVREAFLRDFVETKLDLLTYVDKLRMWRKKFENILDQRPKFLHLEQCSLYLSEFQHQKFDEVEIPGQYLLDKNNNNDFVRLERFVPNVDLVRGHTMCYKRLTLRGYDGKLYPFALQYPATRHSRREERMLQLLGTFNTVLRSKIEIQNRNFSFQIPSSIPLSSHMRIIADKPSYVTMQTISDEYCKNRGMPLDYGIRFYFDRLQTGLIQLKRASASMLSNSTVEEKKQIFRQRALQLRMQLLETLNSSVFPESIYYDYFYKTFERYCDFWFFRRTFTTQYAYMIIMTYVFNIGGRSPQKLFIVKDSGQVMSQDLLPSMTSNQPVFHNTEAVPFRLTPPIQYLISDLGVEGLLSGLVMSIAQSLSSPTTDIKQYLSLYVRDEVFWWSKQQRKPIPQGIQLFETVKVNVELLFRRISVISHNVPEDLPLNQTLVDLVSQATNPQQLAQMDQLWQAWL.

Positions 8 to 2459 are HEAT; the sequence is SLSSSIELLK…REYHIRLLGK (2452 aa). HEAT repeat units lie at residues 46–89, 94–131, 149–188, 230–268, 300–338, 374–412, 438–475, 606–643, 644–683, 735–772, 783–820, 828–867, 1100–1141, 1147–1184, 1193–1230, 1429–1470, 1665–1704, 1709–1746, 1753–1790, 1808–1846, 1891–1934, 1973–2011, 2036–2073, 2120–2157, 2183–2221, and 2401–2438; these read QLYA…CAHR, QYAQSCVLSFISLIKADNEEVAVFCLKVIMDIFKTFKF, TNLPYLIPSIFVENPKSNEEENTTLAFGSYLSTETSIIQQ, PGVQAIIPCFLKMVQIDVPIDIASYAMIEKDSSIDFIEF, LSEKDIIPDIVIKLLRRCPFDMCFARKELLVATRHILST, STLADLLHHVRDELNETQIRKSIMIYSTNMHDLTLSIGL, FLLLSIFDSFVNKFSELNDSLDQFFKKKYEEEIKETKS, IFLKVFETNLPTFFDQLKKNLTLFHIPQFLLSNESTSS, KFLNILLRFLLSRIEELGSSDIRHGSVLLRLFRLSFVTVS, SLYKEVMPLLHALLEAFNSLLISARTPKEKDLFTELCL, PYMSYLMRPLVMSLKSSQELVSQGLRTFELCLDNLTPD, PYIEDLMNALWSHLQPLPYNYNHSHTALKILGKLGGRNRK, AFIL…QDHS, DRQVDILTALFFTLKDTTSEVPTVCKDHVMDVLKQLFR, EIAPGILGHLVLELSNHNSVVRSSTQKLLSLLSELSNT, RKLL…LFHL, NLVSDLTAHLVKKIEEPDLENNVKLILNLILSKDYGFLLK, GILLTYLNQNVSSLEKCNQIFSIFYEVFFQHPSTNVYA, IGALQIISFFLKNVPEITVQHQTEMLKMCSLFGNSEDV, QFPYELVNVVYMALLKSSPIEVRHLVKSSFDNIFSYIFS, EHRG…WNDL, SEAISLLERLLSSGTWASLGMKLSFFTKSITHFDATDAN, ENLSDLKFLLEKSLENESVGVQSAIGNFVSTILTLSNT, DALHTLLPGFMRCFHKVAKEFLSLGSQPSGNSLNLQIV, DQRRWFLSALVQIIEKSSSYEICNYLLEIVRGWIMNSPV, and DFVLPVLSLQFSNSKIAEYLWRDFFNASVCSFTKDEIP. The head stretch occupies residues 2460–3655; sequence TPNVLETILT…QMDQLWQAWL (1196 aa). Positions 2484-3045 constitute an FAT domain; that stretch reads LLVYLSKTYG…HFQLRTAYED (562 aa). A disordered region spans residues 3059 to 3105; sequence RGNSRLRENDSSSDNKSKDLSPSGSFSSVSQFNSKNGSPSSIDSSEK. Residues 3063–3077 are compositionally biased toward basic and acidic residues; the sequence is RLRENDSSSDNKSKD. The segment covering 3078–3092 has biased composition (low complexity); sequence LSPSGSFSSVSQFNS. The PI3K/PI4K catalytic domain maps to 3285-3625; it reads VPNVDLVRGH…VISHNVPEDL (341 aa). Positions 3291 to 3297 are G-loop; the sequence is VRGHTMC. Residues 3491 to 3499 form a catalytic loop region; the sequence is NIGGRSPQK. Residues 3511–3536 are activation loop; sequence SQDLLPSMTSNQPVFHNTEAVPFRLT. One can recognise an FATC domain in the interval 3623-3655; sequence EDLPLNQTLVDLVSQATNPQQLAQMDQLWQAWL.

The protein belongs to the PI3/PI4-kinase family. TRA1 subfamily. In terms of assembly, component of the NuA4 acetyltransferase complex. Tra1 is the scaffold subunit for binding to a variety of transcription activators or transcription factors to recruit NuA4 for targeted gene activation. Requires Hsp90 and its co-chaperone, the Triple-T complex (TTT), for its incorporation into NuA4. Interacts with tel2.

Component of the NuA4 histone H4/H2A acetyltransferase involved in transcription and DNA repair. This Schizosaccharomyces pombe (strain 972 / ATCC 24843) (Fission yeast) protein is NuA4 acetyltransferase complex subunit Tra2.